Consider the following 711-residue polypeptide: Polyribonucleotide nucleotidyltransferase (711 aa).

Residues aspartate 486 and aspartate 492 each coordinate Mg(2+). A KH domain is found at 553–612 (PRIHTIKINPDKIKDVIGKGGSVIRALTEETGTTIEIEDDGTVKIAATDGEKAKHAIRRI). An S1 motif domain is found at 622–690 (GRVYTGKVTR…RQGRIRLSIK (69 aa)). The interval 689 to 711 (IKEATEQSQPAAAPEAPAAEQGE) is disordered. Positions 694 to 711 (EQSQPAAAPEAPAAEQGE) are enriched in low complexity.

Belongs to the polyribonucleotide nucleotidyltransferase family. As to quaternary structure, component of the RNA degradosome, which is a multiprotein complex involved in RNA processing and mRNA degradation. Mg(2+) is required as a cofactor.

The protein localises to the cytoplasm. It carries out the reaction RNA(n+1) + phosphate = RNA(n) + a ribonucleoside 5'-diphosphate. Involved in mRNA degradation. Catalyzes the phosphorolysis of single-stranded polyribonucleotides processively in the 3'- to 5'-direction. In Shigella boydii serotype 4 (strain Sb227), this protein is Polyribonucleotide nucleotidyltransferase.